A 368-amino-acid chain; its full sequence is Protein mab-21-like (368 aa).

Belongs to the mab-21 family.

The sequence is that of Protein mab-21-like from Drosophila melanogaster (Fruit fly).